Here is a 200-residue protein sequence, read N- to C-terminus: Probable fatty acid desaturase MIMI_L630 (200 aa).

2 helical membrane-spanning segments follow: residues 9–29 (FIQI…YHWI) and 79–99 (IGPL…FIMI).

The protein belongs to the fatty acid desaturase CarF family.

It is found in the membrane. This Acanthamoeba polyphaga mimivirus (APMV) protein is Probable fatty acid desaturase MIMI_L630.